The primary structure comprises 182 residues: ATP synthase subunit b (182 aa).

A helical transmembrane segment spans residues 25–45; that stretch reads VVLAGFAVLFYIVVKFVVPMF.

Belongs to the ATPase B chain family. F-type ATPases have 2 components, F(1) - the catalytic core - and F(0) - the membrane proton channel. F(1) has five subunits: alpha(3), beta(3), gamma(1), delta(1), epsilon(1). F(0) has three main subunits: a(1), b(2) and c(10-14). The alpha and beta chains form an alternating ring which encloses part of the gamma chain. F(1) is attached to F(0) by a central stalk formed by the gamma and epsilon chains, while a peripheral stalk is formed by the delta and b chains.

The protein localises to the cell membrane. Functionally, f(1)F(0) ATP synthase produces ATP from ADP in the presence of a proton or sodium gradient. F-type ATPases consist of two structural domains, F(1) containing the extramembraneous catalytic core and F(0) containing the membrane proton channel, linked together by a central stalk and a peripheral stalk. During catalysis, ATP synthesis in the catalytic domain of F(1) is coupled via a rotary mechanism of the central stalk subunits to proton translocation. Component of the F(0) channel, it forms part of the peripheral stalk, linking F(1) to F(0). The sequence is that of ATP synthase subunit b from Arthrobacter sp. (strain FB24).